We begin with the raw amino-acid sequence, 20 residues long: Conotoxin PnMLKM-D0211 (20 aa).

Positions 1–3 are excised as a propeptide; the sequence is VKR. 3 cysteine pairs are disulfide-bonded: cysteine 4–cysteine 18, cysteine 5–cysteine 14, and cysteine 10–cysteine 17. At proline 16 the chain carries 4-hydroxyproline. A Tryptophan amide modification is found at tryptophan 19.

Belongs to the conotoxin M superfamily. As to expression, expressed by the venom duct.

The protein localises to the secreted. The sequence is that of Conotoxin PnMLKM-D0211 from Conus pennaceus (Feathered cone).